Reading from the N-terminus, the 304-residue chain is UDP-N-acetylenolpyruvoylglucosamine reductase (304 aa).

Residues 34 to 198 (IGGKADFLVW…LEVVFALRPG (165 aa)) enclose the FAD-binding PCMH-type domain. The active site involves Arg-177. Residue Ser-227 is the Proton donor of the active site. The active site involves Glu-297.

The protein belongs to the MurB family. The cofactor is FAD.

It localises to the cytoplasm. It carries out the reaction UDP-N-acetyl-alpha-D-muramate + NADP(+) = UDP-N-acetyl-3-O-(1-carboxyvinyl)-alpha-D-glucosamine + NADPH + H(+). It participates in cell wall biogenesis; peptidoglycan biosynthesis. Its function is as follows. Cell wall formation. This is UDP-N-acetylenolpyruvoylglucosamine reductase from Geobacillus kaustophilus (strain HTA426).